The sequence spans 158 residues: 2-C-methyl-D-erythritol 2,4-cyclodiphosphate synthase (158 aa).

Residues D9 and H11 each coordinate a divalent metal cation. Residues D9–H11 and H35–S36 each bind 4-CDP-2-C-methyl-D-erythritol 2-phosphate. H43 contacts a divalent metal cation. 4-CDP-2-C-methyl-D-erythritol 2-phosphate is bound by residues D57–G59, F62–D66, T133–E136, F140, and R143.

It belongs to the IspF family. In terms of assembly, homotrimer. The cofactor is a divalent metal cation.

The catalysed reaction is 4-CDP-2-C-methyl-D-erythritol 2-phosphate = 2-C-methyl-D-erythritol 2,4-cyclic diphosphate + CMP. It functions in the pathway isoprenoid biosynthesis; isopentenyl diphosphate biosynthesis via DXP pathway; isopentenyl diphosphate from 1-deoxy-D-xylulose 5-phosphate: step 4/6. Functionally, involved in the biosynthesis of isopentenyl diphosphate (IPP) and dimethylallyl diphosphate (DMAPP), two major building blocks of isoprenoid compounds. Catalyzes the conversion of 4-diphosphocytidyl-2-C-methyl-D-erythritol 2-phosphate (CDP-ME2P) to 2-C-methyl-D-erythritol 2,4-cyclodiphosphate (ME-CPP) with a corresponding release of cytidine 5-monophosphate (CMP). This is 2-C-methyl-D-erythritol 2,4-cyclodiphosphate synthase from Desulfitobacterium hafniense (strain DSM 10664 / DCB-2).